The chain runs to 262 residues: Indole-3-glycerol phosphate synthase (262 aa).

The protein belongs to the TrpC family.

It carries out the reaction 1-(2-carboxyphenylamino)-1-deoxy-D-ribulose 5-phosphate + H(+) = (1S,2R)-1-C-(indol-3-yl)glycerol 3-phosphate + CO2 + H2O. It functions in the pathway amino-acid biosynthesis; L-tryptophan biosynthesis; L-tryptophan from chorismate: step 4/5. This chain is Indole-3-glycerol phosphate synthase, found in Leuconostoc mesenteroides subsp. mesenteroides (strain ATCC 8293 / DSM 20343 / BCRC 11652 / CCM 1803 / JCM 6124 / NCDO 523 / NBRC 100496 / NCIMB 8023 / NCTC 12954 / NRRL B-1118 / 37Y).